The primary structure comprises 174 residues: tRNA (cytidine(56)-2'-O)-methyltransferase (174 aa).

Residues leucine 83, 108-112 (GAEKV), and 126-133 (VGNQPHSE) each bind S-adenosyl-L-methionine.

It belongs to the aTrm56 family. As to quaternary structure, homodimer.

The protein localises to the cytoplasm. The enzyme catalyses cytidine(56) in tRNA + S-adenosyl-L-methionine = 2'-O-methylcytidine(56) in tRNA + S-adenosyl-L-homocysteine + H(+). Functionally, specifically catalyzes the AdoMet-dependent 2'-O-ribose methylation of cytidine at position 56 in tRNAs. The protein is tRNA (cytidine(56)-2'-O)-methyltransferase of Methanothrix thermoacetophila (strain DSM 6194 / JCM 14653 / NBRC 101360 / PT) (Methanosaeta thermophila).